Reading from the N-terminus, the 429-residue chain is WRKY transcription factor 44 (429 aa).

Residues 159-223 (TGDRSSVDGY…YQGEHNHSKP (65 aa)) constitute a DNA-binding region (WRKY 1). Zn(2+) contacts are provided by Cys190, Cys195, His218, and His220. 2 disordered regions span residues 214–279 (YQGE…RTEK) and 292–348 (AVPR…SDSL). 3 stretches are compositionally biased toward polar residues: residues 254–275 (QDPN…STQN), 295–313 (RSTN…SSQC), and 334–345 (SEAGVSQGSVES). The segment at residues 343–408 (VESDSLEDGF…YEGKHNHHLL (66 aa)) is a DNA-binding region (WRKY 2). Residues Cys374, Cys379, His403, and His405 each coordinate Zn(2+). Over residues 410–422 (SPPSSSTLPFNSP) the composition is skewed to low complexity. The tract at residues 410–429 (SPPSSSTLPFNSPQLSKQTI) is disordered.

It belongs to the WRKY group I family. Leaf promordia, trichomes, atrichoblasts, fertilized eggs, seed coat.

It is found in the nucleus. Transcription factor. Interacts specifically with the W box (5'-(T)TGAC[CT]-3'), a frequently occurring elicitor-responsive cis-acting element. Regulates trichome development, production of mucilage and tannin in seed coats, and maybe root hair development. The protein is WRKY transcription factor 44 (WRKY44) of Arabidopsis thaliana (Mouse-ear cress).